The sequence spans 106 residues: Probable NADP-dependent dehydrogenase in aabA 3'region (106 aa).

NADP(+) is bound at residue 4-28 (LITGASSGFGWEAAKLCVAKGHRVI).

This sequence belongs to the short-chain dehydrogenases/reductases (SDR) family.

The polypeptide is Probable NADP-dependent dehydrogenase in aabA 3'region (Dichelobacter nodosus (Bacteroides nodosus)).